A 1746-amino-acid chain; its full sequence is Inactive tyrosine-protein kinase PEAK1 (1746 aa).

The segment at 44–66 (KTNANHSNNHRIRNTGNFRPPVA) is disordered. Serine 281 carries the phosphoserine modification. 2 disordered regions span residues 334 to 411 (QSMV…KVPE) and 489 to 517 (LEGPVNSPKTKSSSSTPNSPVTSSSLTPG). Over residues 338–349 (SSDSTSPDSSLT) the composition is skewed to low complexity. Residues 355–364 (ETASSLSQKI) show a composition bias toward polar residues. The segment covering 492 to 513 (PVNSPKTKSSSSTPNSPVTSSS) has biased composition (low complexity). Residues serine 540, serine 572, and serine 587 each carry the phosphoserine modification. The tract at residues 551–577 (ITSGTGPNVPPRKNCHKSAPTSPTATN) is disordered. Tyrosine 635 and tyrosine 641 each carry phosphotyrosine. Serine 648 is modified (phosphoserine). Residue tyrosine 665 is modified to Phosphotyrosine. 5 disordered regions span residues 671 to 700 (ESKVPDNTTSKTTDCLQTKGFSNSTEHKRG), 713 to 764 (LNRG…EKAS), 802 to 920 (DADV…AADA), 1052 to 1102 (VTED…DPNP), and 1138 to 1158 (GKTDQEAPNASQPTPPPLPKK). Polar residues predominate over residues 675-694 (PDNTTSKTTDCLQTKGFSNS). Residues 718–730 (SSPQRSYSSSHSS) show a composition bias toward low complexity. 2 stretches are compositionally biased toward polar residues: residues 748–758 (TQESQMVGSSS) and 820–841 (LFTSQPSGEAEAPQTTDSPTTK). A phosphoserine mark is found at serine 826 and serine 854. Positions 864 to 874 (SEPPAPFPPPR) are enriched in pro residues. Polar residues predominate over residues 889–902 (HFTNWTKPTSPTRS). Serine 898 bears the Phosphoserine mark. Composition is skewed to basic and acidic residues over residues 903–920 (TEAESVLHSEGSRRAADA), 1052–1062 (VTEDFSPRDPR), and 1084–1094 (ELEREDGKEDI). A Phosphothreonine modification is found at threonine 1151. Phosphotyrosine is present on tyrosine 1188. Residues 1285 to 1311 (EVVGKIRSLHTDALKKLAVKCEDLFMA) form a required for homodimerization region. Residues 1313 to 1675 (QKDQLRFGVD…LLWGPREDLF (363 aa)) form the Protein kinase domain. Phosphoserine is present on serine 1374. The interval 1402–1456 (LLPWEDPDDPEKDEDDMEETEEDAKGETDGKNPKPCSEAASSQKENQGVMSKKQR) is disordered. The span at 1406–1423 (EDPDDPEKDEDDMEETEE) shows a compositional bias: acidic residues. A compositionally biased stretch (basic and acidic residues) spans 1424–1433 (DAKGETDGKN). Residues 1440 to 1450 (AASSQKENQGV) show a composition bias toward polar residues. The required for homodimerization stretch occupies residues 1670-1743 (PREDLFQTFT…DSLSCIVKIL (74 aa)).

The protein belongs to the protein kinase superfamily. Homodimer. Interacts with BCAR1 and CRK. Interacts with PRAG1. Interacts (when phosphorylated at Tyr-1188) with SHC1 (via PID domain). Found in a complex with PPP1CA, PPP1CC, SHC1 and PEAK1. Interacts (when phosphorylated at Tyr-635) with tensin TNS3 (when phosphorylated on the SH2 domain); TNS3 also interacts with integrins ITGB1, ITGB3 and ITGB5 and mediates their association with PEAK1. Interacts with RASAL2 and GRB2. In terms of processing, phosphorylated on tyrosine in a CSK-dependent manner in response to adhesion to fibronectin and to EGF stimulation. Phosphorylation at Tyr-665 by a Src family kinase controls subcellular localization to focal adhesion and focal adhesion dynamics. Phosphorylation at Tyr-1188 is essential for binding to SHC1. Phosphorylation at Tyr-635 promotes interaction with tensin TNS3.

Its subcellular location is the cytoplasm. It is found in the cytoskeleton. It localises to the cell junction. The protein localises to the focal adhesion. Probable catalytically inactive kinase. Scaffolding protein that regulates the cytoskeleton to control cell spreading and migration by modulating focal adhesion dynamics. Acts as a scaffold for mediating EGFR signaling. The sequence is that of Inactive tyrosine-protein kinase PEAK1 (PEAK1) from Homo sapiens (Human).